Consider the following 239-residue polypeptide: Sugar fermentation stimulation protein homolog (239 aa).

This sequence belongs to the SfsA family.

The sequence is that of Sugar fermentation stimulation protein homolog from Methylobacterium sp. (strain 4-46).